The chain runs to 374 residues: Nudix hydrolase 20, chloroplastic (374 aa).

The transit peptide at 1–49 (MASGFCSLALTVTTSLFSSHAITRRVLPILRWRSSSMSLSPLRHSRALS) directs the protein to the chloroplast. A Nudix hydrolase domain is found at 205–346 (GYGVHMNGYV…KANCSLVIID (142 aa)). The Nudix box signature appears at 244-265 (GGLPHGISCGGNLVKECEEEAG). Positions 259 and 263 each coordinate Mg(2+).

It belongs to the Nudix hydrolase family. Mg(2+) serves as cofactor. Mn(2+) is required as a cofactor. As to expression, expressed in leaves and inflorescences.

Its subcellular location is the plastid. It localises to the chloroplast. Functionally, probably mediates the hydrolysis of some nucleoside diphosphate derivatives. The sequence is that of Nudix hydrolase 20, chloroplastic (NUDT20) from Arabidopsis thaliana (Mouse-ear cress).